The primary structure comprises 139 residues: Ribonuclease P protein component (139 aa).

The protein belongs to the RnpA family. Consists of a catalytic RNA component (M1 or rnpB) and a protein subunit.

The catalysed reaction is Endonucleolytic cleavage of RNA, removing 5'-extranucleotides from tRNA precursor.. Its function is as follows. RNaseP catalyzes the removal of the 5'-leader sequence from pre-tRNA to produce the mature 5'-terminus. It can also cleave other RNA substrates such as 4.5S RNA. The protein component plays an auxiliary but essential role in vivo by binding to the 5'-leader sequence and broadening the substrate specificity of the ribozyme. The sequence is that of Ribonuclease P protein component from Paraburkholderia xenovorans (strain LB400).